A 301-amino-acid polypeptide reads, in one-letter code: Probable alpha-L-glutamate ligase (301 aa).

Positions 104–287 constitute an ATP-grasp domain; the sequence is LQLLSRKGIG…VAGMIYEFIE (184 aa). ATP contacts are provided by residues K141, 178–179, D187, and 211–213; these read EF and RSN. Residues D248, E260, and N262 each contribute to the Mg(2+) site. Positions 248, 260, and 262 each coordinate Mn(2+).

It belongs to the RimK family. Mg(2+) is required as a cofactor. It depends on Mn(2+) as a cofactor.

This Vibrio vulnificus (strain CMCP6) protein is Probable alpha-L-glutamate ligase.